Reading from the N-terminus, the 406-residue chain is NAC transcription factor NAM-B1 (406 aa).

The segment covering 1 to 11 (MGSPDSSSGSA) has biased composition (polar residues). A disordered region spans residues 1 to 40 (MGSPDSSSGSAQKPPRHQHQHQPPPPRRQGSAPELPPGFR). In terms of domain architecture, NAC spans 35–204 (LPPGFRFHPT…DWVLCRIYKK (170 aa)). The DNA-binding element occupies 137–210 (VGVKKALVFY…IYKKTSKAAA (74 aa)).

It is found in the nucleus. Its function is as follows. Transcription factor of the NAC family associated with the grain protein content (GPC). Sequences of the 11 European varieties of H.vulgare tested belongs to the same haplotype while the sequence found in H.spontaneum, an ancestor of the cultivated H.vulgare which has a higher GPC, belongs to an other haplotype. This is NAC transcription factor NAM-B1 (NAM-B1) from Hordeum vulgare subsp. spontaneum (Wild barley).